The chain runs to 533 residues: CTP synthase (533 aa).

Residues 1–270 (MVHLAKYIVV…GDYIVRRIEL (270 aa)) form an amidoligase domain region. Position 16 (Ser-16) interacts with CTP. Ser-16 lines the UTP pocket. Residue 17–22 (SIGKGI) coordinates ATP. Tyr-57 is a binding site for L-glutamine. Asp-74 serves as a coordination point for ATP. Positions 74 and 144 each coordinate Mg(2+). Residues 151-153 (DIE), 191-196 (KTKPTQ), and Lys-227 each bind CTP. Residues 191–196 (KTKPTQ) and Lys-227 each bind UTP. The Glutamine amidotransferase type-1 domain maps to 303 to 533 (YVELEDSYIS…FLRAALERSR (231 aa)). Gly-355 contributes to the L-glutamine binding site. Catalysis depends on Cys-382, which acts as the Nucleophile; for glutamine hydrolysis. L-glutamine contacts are provided by residues 383-386 (LGMQ), Glu-405, and Arg-462. Residues His-507 and Glu-509 contribute to the active site.

It belongs to the CTP synthase family. In terms of assembly, homotetramer.

It carries out the reaction UTP + L-glutamine + ATP + H2O = CTP + L-glutamate + ADP + phosphate + 2 H(+). It catalyses the reaction L-glutamine + H2O = L-glutamate + NH4(+). The enzyme catalyses UTP + NH4(+) + ATP = CTP + ADP + phosphate + 2 H(+). Its pathway is pyrimidine metabolism; CTP biosynthesis via de novo pathway; CTP from UDP: step 2/2. Allosterically activated by GTP, when glutamine is the substrate; GTP has no effect on the reaction when ammonia is the substrate. The allosteric effector GTP functions by stabilizing the protein conformation that binds the tetrahedral intermediate(s) formed during glutamine hydrolysis. Inhibited by the product CTP, via allosteric rather than competitive inhibition. In terms of biological role, catalyzes the ATP-dependent amination of UTP to CTP with either L-glutamine or ammonia as the source of nitrogen. Regulates intracellular CTP levels through interactions with the four ribonucleotide triphosphates. The sequence is that of CTP synthase from Methanothermobacter thermautotrophicus (strain ATCC 29096 / DSM 1053 / JCM 10044 / NBRC 100330 / Delta H) (Methanobacterium thermoautotrophicum).